A 259-amino-acid chain; its full sequence is Submandibular glandular kallikrein-9 (259 aa).

The signal sequence occupies residues 1 to 18 (MWFLILFLALSLGQIDAA). The propeptide at 19–24 (PPGQSR) is activation peptide. The region spanning 25–256 (VVGGYNCETN…FTSWIKKVMK (232 aa)) is the Peptidase S1 domain. Intrachain disulfides connect Cys-31-Cys-171, Cys-48-Cys-64, Cys-150-Cys-217, Cys-182-Cys-196, and Cys-207-Cys-232. The Charge relay system role is filled by His-63. The N-linked (GlcNAc...) asparagine glycan is linked to Asn-106. The Charge relay system role is filled by Asp-118. The active-site Charge relay system is Ser-211.

This sequence belongs to the peptidase S1 family. Kallikrein subfamily. In terms of assembly, heterodimer of a light chain and heavy chain linked by a disulfide bond.

The enzyme catalyses Preferential cleavage of Arg-|-Xaa bonds in small molecule substrates. Highly selective action to release kallidin (lysyl-bradykinin) from kininogen involves hydrolysis of Met-|-Xaa or Leu-|-Xaa.. Glandular kallikreins cleave Met-Lys and Arg-Ser bonds in kininogen to release Lys-bradykinin. This enzyme has a vasoconstrictor activity. KLK-9 has both a chymotrypsin-like and a trypsin-like properties. This is Submandibular glandular kallikrein-9 (Klk9) from Rattus norvegicus (Rat).